Consider the following 348-residue polypeptide: Phosphate acyltransferase (348 aa).

The protein belongs to the PlsX family. As to quaternary structure, homodimer. Probably interacts with PlsY.

The protein resides in the cytoplasm. It catalyses the reaction a fatty acyl-[ACP] + phosphate = an acyl phosphate + holo-[ACP]. The protein operates within lipid metabolism; phospholipid metabolism. In terms of biological role, catalyzes the reversible formation of acyl-phosphate (acyl-PO(4)) from acyl-[acyl-carrier-protein] (acyl-ACP). This enzyme utilizes acyl-ACP as fatty acyl donor, but not acyl-CoA. The protein is Phosphate acyltransferase of Rhizobium etli (strain ATCC 51251 / DSM 11541 / JCM 21823 / NBRC 15573 / CFN 42).